The sequence spans 958 residues: Probable protein phosphatase DDB_G0282105 (958 aa).

The next 2 helical transmembrane spans lie at 2–22 (VLMM…SLMV) and 26–46 (FLEF…ILFF). The stretch at 142–330 (SASQQSELTN…KDKERERSSS (189 aa)) forms a coiled coil. The span at 312 to 328 (QEKEKQKLEKDKERERS) shows a compositional bias: basic and acidic residues. Disordered regions lie at residues 312–361 (QEKE…PIPI), 380–421 (SVNG…PKFK), 445–475 (HLGS…TTPI), 491–525 (ITSP…ILSP), and 619–659 (NNNN…NDNK). Composition is skewed to low complexity over residues 329 to 361 (SSFS…PIPI), 390 to 401 (SSVSPPSSSYLR), 452 to 475 (TPAN…TTPI), 491 to 515 (ITSP…SSSS), and 619 to 655 (NNNN…NNNK). The stretch at 613-666 (NFLKTNNNNNKNNIEESNNNNNNNNNNNNNNNNNNNNNNNNNKNDNKEVNSKLE) forms a coiled coil. A PPM-type phosphatase domain is found at 675–958 (KIGLRRAKKK…DNVTVIIVKL (284 aa)). Mn(2+) is bound by residues Asp-722, Gly-723, Asp-905, and Asp-949.

It in the C-terminal section; belongs to the PP2C family. Mg(2+) serves as cofactor. The cofactor is Mn(2+).

The protein resides in the membrane. It catalyses the reaction O-phospho-L-seryl-[protein] + H2O = L-seryl-[protein] + phosphate. The catalysed reaction is O-phospho-L-threonyl-[protein] + H2O = L-threonyl-[protein] + phosphate. This Dictyostelium discoideum (Social amoeba) protein is Probable protein phosphatase DDB_G0282105.